The primary structure comprises 511 residues: MRWISRPGWPGHLLALAAGALTPLALAPFVYWPLAILSIALLYLGLRGLPGKSALWRGWWYGFGAFGAGTSWIYVSIHDYGAASVPLASFLMLGFTAGVAFFFALPAWLWARCLRRDNAPLGDALAFAALWLALELFRSWFLTGFPWLYAGYSQLQGPLAGLVPVGGVWLSSFVIALSAALLVNLPRLFPHGASLLLGLVLLLGPWAAGLYLKGHAWTHSAGEPLRVVAIQGNIAQELKWDPNQVRAQLDLYRDLSLPQQDVDLIVWPETAVPILQDMASGYLGAMGQVADEKNAALITGVPVRERLADGKSRYFNGITVVGEGAGTYLKQKLVPFGEYVPLQDLLRGLIAFFDLPMSDFARGPADQPLLKAKGYEIAPYICYEVVYPEFAAALAAQSQVLLTVSNDTWFGTSIGPLQHLQMAQMRALESGRWMIRATNNGVTGLIDPYGRIVRQIPQFQQGILRGEVIPMQGLTPYLQYRVWPLAGLAGVLLLWALLGRQLRPQERRLFG.

The next 6 helical transmembrane spans lie at 24-44 (LALA…LLYL), 58-78 (GWWY…VSIH), 90-110 (FLML…AWLW), 125-145 (LAFA…LTGF), 163-183 (VPVG…ALLV), and 192-212 (GASL…GLYL). Residues 230–470 (IQGNIAQELK…QGILRGEVIP (241 aa)) enclose the CN hydrolase domain. Catalysis depends on glutamate 269, which acts as the Proton acceptor. The active site involves lysine 330. The Nucleophile role is filled by cysteine 382. The chain crosses the membrane as a helical span at residues 482–502 (VWPLAGLAGVLLLWALLGRQL).

It belongs to the CN hydrolase family. Apolipoprotein N-acyltransferase subfamily.

The protein resides in the cell inner membrane. It catalyses the reaction N-terminal S-1,2-diacyl-sn-glyceryl-L-cysteinyl-[lipoprotein] + a glycerophospholipid = N-acyl-S-1,2-diacyl-sn-glyceryl-L-cysteinyl-[lipoprotein] + a 2-acyl-sn-glycero-3-phospholipid + H(+). It participates in protein modification; lipoprotein biosynthesis (N-acyl transfer). Its function is as follows. Catalyzes the phospholipid dependent N-acylation of the N-terminal cysteine of apolipoprotein, the last step in lipoprotein maturation. The chain is Apolipoprotein N-acyltransferase from Pseudomonas aeruginosa (strain UCBPP-PA14).